Consider the following 189-residue polypeptide: uncharacterized protein (189 aa).

Belongs to the inositol monophosphatase superfamily.

This is an uncharacterized protein from Leptospira biflexa.